The chain runs to 692 residues: Mitogen-activated protein kinase kinase kinase 7-interacting protein 3 homolog (692 aa).

The CUE domain maps to 8 to 51; the sequence is LDIQVLNDLQQRFPEIPRDVVSQCMLQNNSNLDACYRALTQESC. 3 disordered regions span residues 138-159, 206-333, and 349-427; these read NDQNRNSPTPPPQPVQQPGVGT, YGTP…PYGP, and SQQR…VVMS. Polar residues-rich tracts occupy residues 215–230, 249–298, and 349–387; these read PSQNSPGRQTQQNTAW, QSFQ…QTSH, and SQQRPGPTLNRSPSPINNQSAQRSQQHPVYVSNARSGSP. Positions 409–422 are enriched in low complexity; it reads SQPPTTTGSPTPSS. The stretch at 496–580 forms a coiled coil; sequence ALLLHQRARM…QKEIDLLQSR (85 aa). The disordered stretch occupies residues 598 to 662; that stretch reads SPGPAVPPNT…SPRPGRDEDF (65 aa). Residues 608 to 620 show a composition bias toward basic and acidic residues; that stretch reads CKKESSETTSGER. A RanBP2-type zinc finger spans residues 662 to 692; sequence FEGSPWNCNSCTFLNHPALNRCEQCEMPRFT.

May play a role in signaling pathway. In Xenopus laevis (African clawed frog), this protein is Mitogen-activated protein kinase kinase kinase 7-interacting protein 3 homolog (map3k7ip3).